We begin with the raw amino-acid sequence, 475 residues long: MKNFQDKIKKLVPEMRRVNQIHFIGIGGAGMSGIAEVLLNEGYQISGSDIAEGPVTKRLAEAGAKVFIGHQAENVAGASVVVASSAIDDSNPEVRAAKEARIPVIQRAQMLAEIMRFRHGIAVAGTHGKTTTTAMISMIYTEAKLDPTFVNGGLVKSAGKNAHLGASRYLIAEADESDASFLHLQPMVSVVTNIEPDHMDTYGGDFEQMKATYVKFLRNLPFYGLAVMCADDETVMEIAPQVGRQVLTYGFSEKADYRIEDYQQTGFQGHYTVVCPNGERIDVLLNVPGKHNALNATAALAVAKEEGIANEAILAALADFQGAGRRFDQLGSFIRPNGKVMLVDDYGHHPTEVDVTIKAARSGWENKRVVMIFQPHRYSRTRDLFDDFVQVLSQVDALIMLEVYAAGEAPIVGADSKALCRSIRNLGKVDPILVSDTDQLGEVLDQIIQDGDLILAQGAGSVSRISRGLAESWKA.

125-131 contributes to the ATP binding site; it reads GTHGKTT.

This sequence belongs to the MurCDEF family.

The protein localises to the cytoplasm. The enzyme catalyses UDP-N-acetyl-alpha-D-muramate + L-alanine + ATP = UDP-N-acetyl-alpha-D-muramoyl-L-alanine + ADP + phosphate + H(+). Its pathway is cell wall biogenesis; peptidoglycan biosynthesis. Functionally, cell wall formation. In Actinobacillus pleuropneumoniae serotype 7 (strain AP76), this protein is UDP-N-acetylmuramate--L-alanine ligase.